The primary structure comprises 137 residues: Methylglyoxal synthase (137 aa).

Positions 1-137 (MKIALIAHDR…NIVHGRDRDA (137 aa)) constitute an MGS-like domain. Substrate-binding positions include histidine 8, lysine 12, 34-37 (TGTT), and 54-55 (SG). The Proton donor/acceptor role is filled by aspartate 60. Histidine 87 is a binding site for substrate.

The protein belongs to the methylglyoxal synthase family.

It catalyses the reaction dihydroxyacetone phosphate = methylglyoxal + phosphate. Its function is as follows. Catalyzes the formation of methylglyoxal from dihydroxyacetone phosphate. The protein is Methylglyoxal synthase of Bacillus licheniformis (strain ATCC 14580 / DSM 13 / JCM 2505 / CCUG 7422 / NBRC 12200 / NCIMB 9375 / NCTC 10341 / NRRL NRS-1264 / Gibson 46).